The sequence spans 249 residues: Ditrans,polycis-undecaprenyl-diphosphate synthase ((2E,6E)-farnesyl-diphosphate specific) (249 aa).

Asp-29 is an active-site residue. Asp-29 is a binding site for Mg(2+). Residues 30 to 33, Trp-34, Arg-42, His-46, and 74 to 76 contribute to the substrate site; these read GNGR and STE. Asn-77 (proton acceptor) is an active-site residue. Substrate-binding positions include Trp-78, Arg-80, Arg-197, and 203–205; that span reads RLS. Residue Glu-216 coordinates Mg(2+).

This sequence belongs to the UPP synthase family. In terms of assembly, homodimer. Mg(2+) is required as a cofactor.

The catalysed reaction is 8 isopentenyl diphosphate + (2E,6E)-farnesyl diphosphate = di-trans,octa-cis-undecaprenyl diphosphate + 8 diphosphate. Generates ditrans,octacis-undecaprenyl pyrophosphate (UPP) from isopentenyl pyrophosphate (IPP) and farnesyl diphosphate. UPP is the precursor of glycosyl carrier lipid in the biosynthesis of bacterial cell wall polysaccharide components such as peptidoglycan and lipopolysaccharide. This Micrococcus luteus (Micrococcus lysodeikticus) protein is Ditrans,polycis-undecaprenyl-diphosphate synthase ((2E,6E)-farnesyl-diphosphate specific) (uppS).